The sequence spans 210 residues: 3-hexulose-6-phosphate synthase (210 aa).

This sequence belongs to the HPS/KGPDC family. HPS subfamily.

It catalyses the reaction D-ribulose 5-phosphate + formaldehyde = D-arabino-hex-3-ulose 6-phosphate. It participates in one-carbon metabolism; formaldehyde assimilation via RuMP pathway; D-fructose 6-phosphate from D-ribulose 5-phosphate and formaldehyde: step 1/2. In terms of biological role, catalyzes the condensation of ribulose 5-phosphate with formaldehyde to form 3-hexulose 6-phosphate. The protein is 3-hexulose-6-phosphate synthase of Staphylococcus aureus (strain MRSA252).